Consider the following 288-residue polypeptide: MGYNEQERAFIEWYPRGYGVGFKVKRRLFETQTEYQRLEIYETEGFGKLLVLDGTVQLVEVGEESYHEVLVHPVMLAHPNPRKVLVIGGGDGGTLREVLRHDTVEKAIMVEIDEGVVEASYLYLDVAKDLLDRLIKKEEPRAELIIGDGVKYLRETDERFDVIIVDSTDPVGPAKLLFSEEFYRDAYEKLNEKGLYVTQAGSVYLFTNELLDAYKAMKKVFDRVYYFSFPVIGYASPWSFLVGVKGDVDFTRIDLERAKKLDLYYYDPERHETLFQMPRYVRKLLEGQ.

Positions 11 to 245 (IEWYPRGYGV…SPWSFLVGVK (235 aa)) constitute a PABS domain. Gln-36 contributes to the S-methyl-5'-thioadenosine binding site. Spermidine contacts are provided by His-67 and Asp-91. S-methyl-5'-thioadenosine-binding positions include Glu-111 and 148–149 (DG). Asp-166 (proton acceptor) is an active-site residue. 166 to 169 (DSTD) is a spermidine binding site. Residue Pro-173 participates in S-methyl-5'-thioadenosine binding.

The protein belongs to the spermidine/spermine synthase family. In terms of assembly, homodimer or homotetramer.

The protein resides in the cytoplasm. The enzyme catalyses S-adenosyl 3-(methylsulfanyl)propylamine + agmatine = N(1)-(3-aminopropyl)agmatine + S-methyl-5'-thioadenosine + H(+). It catalyses the reaction S-adenosyl 3-(methylsulfanyl)propylamine + putrescine = S-methyl-5'-thioadenosine + spermidine + H(+). It carries out the reaction cadaverine + S-adenosyl 3-(methylsulfanyl)propylamine = aminopropylcadaverine + S-methyl-5'-thioadenosine + H(+). It participates in amine and polyamine biosynthesis; spermidine biosynthesis; spermidine from putrescine: step 1/1. Its function is as follows. Involved in the biosynthesis of polyamines which are thought to support the growth of thermophilic microorganisms under high-temperature conditions. It seems that long-chain and branched-chain of polyamines effectively stabilize DNA and RNA, respectively. Catalyzes the irreversible transfer of a propylamine group from the amino donor S-adenosylmethioninamine (decarboxy-AdoMet) to agmatine to yield N1-aminopropylagmatine. It can also use cadaverine (1,5-diaminopentane) and putrescine (1,4-diaminobutane) as substrate with a lower activity than that of agmatine. The reaction involves a nucleophilic attack on the C-3 methylene of the propylamine moiety adjacent to the positively charged sulfur of decarboxy-AdoMet. The protein is Polyamine aminopropyltransferase of Thermococcus kodakarensis (strain ATCC BAA-918 / JCM 12380 / KOD1) (Pyrococcus kodakaraensis (strain KOD1)).